A 436-amino-acid polypeptide reads, in one-letter code: MIIPWQKSTLYKHKTSIECLLNYSFMPGTPETALDNLALVHTYAALTSTSTCKICQTLYSLISKNTPAVSFYEDYSLLCLTCLYAPITWTSTLMTAADFIEIIKTHFPTSDTSNFYAPQSLLAIDIQLHFYIHRCFKVLSSNDILSTSSLQFLKTTFLQGKLTGSIPGQFCFKTAWIKNDTCCNNTSHDLPSNLSSVFCKADLQLKPNLLPIILDIWSASDLFKNNVSNSEQPFFTYPEDIDICQGPCLLSPSLGLTQKNNTTSICPLCECIASHPNAIDTLQTLKYTIINCIENNVKLLDRISFILSNDELDFIQDPILKTVIQNCSIQEIHKHFFCDPQCALNIKKTSTNILFKIPDPNLLKVLCARLATGEHLSKNYYLDCEYLETLALIFKCSQTCKVGKTTFLEIIRELDLLSKKHNIPTVKAFQTSQIYA.

Residues cysteine 52, cysteine 55, histidine 129, cysteine 135, cysteine 182, cysteine 183, cysteine 266, cysteine 269, histidine 335, cysteine 342, cysteine 384, and histidine 421 each coordinate Zn(2+). 3 zinc finger regions span residues 52–135 (CKIC…IHRC), 182–421 (CCNN…SKKH), and 266–342 (CPLC…DPQC).

The protein belongs to the herpesviridae UL32 protein family.

It is found in the host cytoplasm. The protein localises to the host nucleus. Functionally, plays a role in efficient localization of neo-synthesized capsids to nuclear replication compartments, thereby controlling cleavage and packaging of virus genomic DNA. The polypeptide is Packaging protein UL32 (68) (Saimiriine herpesvirus 2 (strain 11) (SaHV-2)).